Here is a 2475-residue protein sequence, read N- to C-terminus: Non-reducing polyketide synthase prhL (2475 aa).

Residues 14-253 (VLFGSKYSEI…HHADHLSAAQ (240 aa)) are N-terminal acylcarrier protein transacylase domain (SAT). A Ketosynthase family 3 (KS3) domain is found at 384-800 (SIPIAVTGLA…GSNAAIVLKE (417 aa)). Active-site for beta-ketoacyl synthase activity residues include cysteine 549, histidine 684, and histidine 723. The segment at 910–1212 (LCFGGQTGNK…CPMDLSGPQA (303 aa)) is malonyl-CoA:ACP transacylase (MAT) domain. Serine 997 functions as the For acyl/malonyl transferase activity in the catalytic mechanism. The interval 1279 to 1407 (EGLKLVQLLK…GTISLSPGAN (129 aa)) is N-terminal hotdog fold. In terms of domain architecture, PKS/mFAS DH spans 1279 to 1586 (EGLKLVQLLK…FTSVSIQSLR (308 aa)). The tract at residues 1282–1585 (KLVQLLKNEG…TFTSVSIQSL (304 aa)) is product template (PT) domain. The active-site Proton acceptor; for dehydratase activity is the histidine 1312. The interval 1435–1586 (SSSGLKRSTV…FTSVSIQSLR (152 aa)) is C-terminal hotdog fold. Catalysis depends on aspartate 1493, which acts as the Proton donor; for dehydratase activity. One can recognise a Carrier domain in the interval 1626 to 1703 (SSNGDDLRTV…ALVQRIFPGR (78 aa)). The residue at position 1663 (serine 1663) is an O-(pantetheine 4'-phosphoryl)serine. Positions 1865–2098 (HHTSEHKLLH…GFNWVDWTDN (234 aa)) are methyltransferase (CMeT) domain. Positions 2127 to 2475 (SDIHEETVVY…YEFLRSHVRL (349 aa)) are thioesterase (TE) domain. Residues serine 2250 and aspartate 2412 each act as for thioesterase activity in the active site.

The catalysed reaction is 3 malonyl-CoA + acetyl-CoA + 2 S-adenosyl-L-methionine = 3,5-dimethylorsellinate + 2 S-adenosyl-L-homocysteine + 3 CO2 + 4 CoA. The protein operates within secondary metabolite biosynthesis; terpenoid biosynthesis. Functionally, non-reducing polyketide synthase; part of the gene cluster that mediates the biosynthesis of paraherquonin, a meroterpenoid with a unique, highly congested hexacyclic molecular architecture. The first step of the pathway is the synthesis of 3,5-dimethylorsellinic acid (DMOA) by the polyketide synthase prhL. Synthesis of DMOA is followed by farnesylation by the prenyltransferase prhE, methylesterification by the methyl-transferase prhM, epoxidation of the prenyl chain by the flavin-dependent monooxygenase prhF, and cyclization of the farnesyl moiety by the terpene cyclase prhH, to yield the tetracyclic intermediate, protoaustinoid A. The short chain dehydrogenase prhI then oxidizes the C-3 alcohol group of the terpene cyclase product to transform protoaustinoid A into protoaustinoid B. The FAD-binding monooxygenase prhJ catalyzes the oxidation of protoaustinoid B into preaustinoid A which is further oxidized into preaustinoid A1 by FAD-binding monooxygenase phrK. Finally, prhA leads to berkeleydione via the berkeleyone B intermediate. PrhA is a multifunctional dioxygenase that first desaturates at C5-C6 to form berkeleyone B, followed by rearrangement of the A/B-ring to form the cycloheptadiene moiety in berkeleydione. Berkeleydione serves as the key intermediate for the biosynthesis of paraherquonin as well as many other meroterpenoids. The cytochrome P450 monooxygenases prhB, prhD, and prhN, as well as the isomerase prhC, are probably involved in the late stage of paraherquonin biosynthesis, after the production of berkeleydione. Especially prhC might be a multifunctional enzyme that catalyzes the D-ring expansion via intramolecular methoxy rearrangement, as well as the hydrolysis of the expanded D-ring. The sequence is that of Non-reducing polyketide synthase prhL from Penicillium brasilianum.